Consider the following 369-residue polypeptide: Cytoplasmic tRNA 2-thiolation protein 1 (369 aa).

It belongs to the TtcA family. CTU1/NCS6/ATPBD3 subfamily.

The protein localises to the cytoplasm. Its pathway is tRNA modification; 5-methoxycarbonylmethyl-2-thiouridine-tRNA biosynthesis. Plays a central role in 2-thiolation of mcm(5)S(2)U at tRNA wobble positions of tRNA(Lys), tRNA(Glu) and tRNA(Gln). Directly binds tRNAs and probably acts by catalyzing adenylation of tRNAs, an intermediate required for 2-thiolation. It is unclear whether it acts as a sulfurtransferase that transfers sulfur from thiocarboxylated URM1 onto the uridine of tRNAs at wobble position. Prior mcm(5) tRNA modification by the elongator complex is required for 2-thiolation. May also be involved in protein urmylation. The sequence is that of Cytoplasmic tRNA 2-thiolation protein 1 from Cryptococcus neoformans var. neoformans serotype D (strain JEC21 / ATCC MYA-565) (Filobasidiella neoformans).